The following is a 549-amino-acid chain: Glucose-6-phosphate isomerase (549 aa).

Catalysis depends on Glu-355, which acts as the Proton donor. Catalysis depends on residues His-386 and Lys-514.

It belongs to the GPI family.

The protein resides in the cytoplasm. It carries out the reaction alpha-D-glucose 6-phosphate = beta-D-fructose 6-phosphate. The protein operates within carbohydrate biosynthesis; gluconeogenesis. It participates in carbohydrate degradation; glycolysis; D-glyceraldehyde 3-phosphate and glycerone phosphate from D-glucose: step 2/4. In terms of biological role, catalyzes the reversible isomerization of glucose-6-phosphate to fructose-6-phosphate. This Salmonella arizonae (strain ATCC BAA-731 / CDC346-86 / RSK2980) protein is Glucose-6-phosphate isomerase.